A 142-amino-acid polypeptide reads, in one-letter code: Large ribosomal subunit protein uL13 (142 aa).

It belongs to the universal ribosomal protein uL13 family. As to quaternary structure, part of the 50S ribosomal subunit.

Its function is as follows. This protein is one of the early assembly proteins of the 50S ribosomal subunit, although it is not seen to bind rRNA by itself. It is important during the early stages of 50S assembly. The chain is Large ribosomal subunit protein uL13 from Tolumonas auensis (strain DSM 9187 / NBRC 110442 / TA 4).